The sequence spans 423 residues: Histidine--tRNA ligase (423 aa).

This sequence belongs to the class-II aminoacyl-tRNA synthetase family. Homodimer.

Its subcellular location is the cytoplasm. The enzyme catalyses tRNA(His) + L-histidine + ATP = L-histidyl-tRNA(His) + AMP + diphosphate + H(+). In Haemophilus influenzae (strain 86-028NP), this protein is Histidine--tRNA ligase.